The sequence spans 194 residues: Holliday junction branch migration complex subunit RuvA (194 aa).

The domain I stretch occupies residues M1–M64. The domain II stretch occupies residues T65–E140. The tract at residues E140 to A143 is flexible linker. The domain III stretch occupies residues A144 to K194.

Belongs to the RuvA family. Homotetramer. Forms an RuvA(8)-RuvB(12)-Holliday junction (HJ) complex. HJ DNA is sandwiched between 2 RuvA tetramers; dsDNA enters through RuvA and exits via RuvB. An RuvB hexamer assembles on each DNA strand where it exits the tetramer. Each RuvB hexamer is contacted by two RuvA subunits (via domain III) on 2 adjacent RuvB subunits; this complex drives branch migration. In the full resolvosome a probable DNA-RuvA(4)-RuvB(12)-RuvC(2) complex forms which resolves the HJ.

The protein localises to the cytoplasm. In terms of biological role, the RuvA-RuvB-RuvC complex processes Holliday junction (HJ) DNA during genetic recombination and DNA repair, while the RuvA-RuvB complex plays an important role in the rescue of blocked DNA replication forks via replication fork reversal (RFR). RuvA specifically binds to HJ cruciform DNA, conferring on it an open structure. The RuvB hexamer acts as an ATP-dependent pump, pulling dsDNA into and through the RuvAB complex. HJ branch migration allows RuvC to scan DNA until it finds its consensus sequence, where it cleaves and resolves the cruciform DNA. The protein is Holliday junction branch migration complex subunit RuvA of Nitrosomonas eutropha (strain DSM 101675 / C91 / Nm57).